Here is a 526-residue protein sequence, read N- to C-terminus: Estrogen receptor beta (526 aa).

Residues methionine 1 to phenylalanine 145 are modulating. Residues serine 84 and serine 102 each carry the phosphoserine; by MAPK modification. NR C4-type zinc fingers lie at residues cysteine 146–cysteine 166 and cysteine 182–cysteine 206. Positions cysteine 146–methionine 211 form a DNA-binding region, nuclear receptor. The NR LBD domain occupies serine 261 to histidine 494. Residues leucine 502–glutamine 526 are disordered. Basic and acidic residues predominate over residues glutamate 507 to serine 520.

This sequence belongs to the nuclear hormone receptor family. NR3 subfamily. In terms of assembly, binds DNA as a homodimer. Can form a heterodimer with ESR1. Interacts with NCOA1, NCOA3, NCOA5 and NCOA6 coactivators, leading to a strong increase of transcription of target genes. Interacts with UBE1C and AKAP13. Interacts with DNTTIP2. Interacts with CCDC62 in the presence of estradiol/E2; this interaction seems to enhance the transcription of target genes. Interacts with DNAAF4. Interacts with PRMT2. Interacts with CCAR2 (via N-terminus) in a ligand-independent manner. Interacts with RBM39, in the presence of estradiol (E2). Interacts with STUB1/CHIP. In terms of processing, phosphorylation at Ser-84 and Ser-102 recruits NCOA1.

The protein localises to the nucleus. Functionally, nuclear hormone receptor. Binds estrogens with an affinity similar to that of ESR1/ER-alpha, and activates expression of reporter genes containing estrogen response elements (ERE) in an estrogen-dependent manner. The chain is Estrogen receptor beta (ESR2) from Sus scrofa (Pig).